A 97-amino-acid polypeptide reads, in one-letter code: Co-chaperonin GroES (97 aa).

This sequence belongs to the GroES chaperonin family. In terms of assembly, heptamer of 7 subunits arranged in a ring. Interacts with the chaperonin GroEL.

Its subcellular location is the cytoplasm. In terms of biological role, together with the chaperonin GroEL, plays an essential role in assisting protein folding. The GroEL-GroES system forms a nano-cage that allows encapsulation of the non-native substrate proteins and provides a physical environment optimized to promote and accelerate protein folding. GroES binds to the apical surface of the GroEL ring, thereby capping the opening of the GroEL channel. This Buchnera aphidicola subsp. Tetraneura caerulescens protein is Co-chaperonin GroES.